The following is a 383-amino-acid chain: Lipid-A-disaccharide synthase (383 aa).

Belongs to the LpxB family.

The enzyme catalyses a lipid X + a UDP-2-N,3-O-bis[(3R)-3-hydroxyacyl]-alpha-D-glucosamine = a lipid A disaccharide + UDP + H(+). It participates in bacterial outer membrane biogenesis; LPS lipid A biosynthesis. Condensation of UDP-2,3-diacylglucosamine and 2,3-diacylglucosamine-1-phosphate to form lipid A disaccharide, a precursor of lipid A, a phosphorylated glycolipid that anchors the lipopolysaccharide to the outer membrane of the cell. The protein is Lipid-A-disaccharide synthase of Aliivibrio fischeri (strain MJ11) (Vibrio fischeri).